The sequence spans 229 residues: Protein 33K (229 aa).

Positions 1 to 157 are disordered; sequence MAPKKKLQLP…GALRLAPNEP (157 aa). Residues 14 to 54 are compositionally biased toward acidic residues; it reads TDEEEYWDSQAEEVLDEEEEDMMEDWESLDEEASEVEEVSD. 3 stretches are compositionally biased toward low complexity: residues 55–64, 71–82, and 100–122; these read ETPSPSVAFP, SATGSSMATTSA, and TTGTRAAHTAPAAAAAAATAAAT. Positions 172-199 are necessary for nuclear subcellular location; sequence YAIFQQSRGQEQELKIKNRSLRSLTRSC. The interval 178-198 is RS-repeat; required for splicing enhancer activity; the sequence is SRGQEQELKIKNRSLRSLTRS.

This sequence belongs to the adenoviridae splicing factor family. As to quaternary structure, homooligomer. Interacts with DBP; this interaction occurs at a unique vertex during genome packaging. Interacts with IVa2; this interaction occurs at a unique vertex during genome packaging and seems to potentiate IVa2 and 33K oligomerization. Phosphorylated in vitro by human PKA and PRKDC. PRKDC inhibits, whereas PKA activates the splicing factor.

It localises to the host nucleus. Its function is as follows. Promotes alternative splicing of late transcripts by promoting splicing at weak 3' splice sites. Required for the temporal activation of major late pre-mRNA splicing at late times of infection. Induces the splicing and expression of the late capsid vertex protein. Probably functions as the small terminase that is part of the molecular motor that translocates genomic DNA in empty capsid during DNA packaging. This motor is located at a unique vertex and comprises at least the IVa2 ATPase, the small terminase 33K and probably a portal. Forms a ring-like structure of about 17 nm in which genomic DNA is translocated into the capsid. Stimulates IVa2 ATPase activity in the presence of the viral genome. Once the DNA is packaged, the terminase detaches: the 33K protein is present in the empty particles, but not in the mature virions. Also involved in virion assembly. The sequence is that of Protein 33K from Homo sapiens (Human).